Reading from the N-terminus, the 284-residue chain is Pseudouridine-5'-phosphate glycosidase (284 aa).

Glutamate 8 (proton donor) is an active-site residue. Substrate is bound by residues lysine 69 and valine 89. Aspartate 119 contributes to the Mn(2+) binding site. 121–123 (SQD) provides a ligand contact to substrate. Lysine 140 serves as the catalytic Nucleophile.

Belongs to the pseudouridine-5'-phosphate glycosidase family. As to quaternary structure, homotrimer. Mn(2+) serves as cofactor.

The enzyme catalyses D-ribose 5-phosphate + uracil = psi-UMP + H2O. Catalyzes the reversible cleavage of pseudouridine 5'-phosphate (PsiMP) to ribose 5-phosphate and uracil. Functions biologically in the cleavage direction, as part of a pseudouridine degradation pathway. In Pseudothermotoga lettingae (strain ATCC BAA-301 / DSM 14385 / NBRC 107922 / TMO) (Thermotoga lettingae), this protein is Pseudouridine-5'-phosphate glycosidase.